Reading from the N-terminus, the 671-residue chain is DNA ligase (671 aa).

NAD(+) contacts are provided by residues 31-35 (DAEYD), 80-81 (SL), and Glu110. Lys112 acts as the N6-AMP-lysine intermediate in catalysis. Positions 133, 167, 283, and 307 each coordinate NAD(+). Zn(2+) contacts are provided by Cys401, Cys404, Cys419, and Cys424. In terms of domain architecture, BRCT spans 587–671 (EEELVFTGKT…YLPDEGGLNE (85 aa)).

This sequence belongs to the NAD-dependent DNA ligase family. LigA subfamily. It depends on Mg(2+) as a cofactor. Mn(2+) is required as a cofactor.

The catalysed reaction is NAD(+) + (deoxyribonucleotide)n-3'-hydroxyl + 5'-phospho-(deoxyribonucleotide)m = (deoxyribonucleotide)n+m + AMP + beta-nicotinamide D-nucleotide.. DNA ligase that catalyzes the formation of phosphodiester linkages between 5'-phosphoryl and 3'-hydroxyl groups in double-stranded DNA using NAD as a coenzyme and as the energy source for the reaction. It is essential for DNA replication and repair of damaged DNA. This chain is DNA ligase, found in Listeria monocytogenes serotype 4b (strain F2365).